The following is a 356-amino-acid chain: S-adenosylmethionine:tRNA ribosyltransferase-isomerase (356 aa).

The protein belongs to the QueA family. In terms of assembly, monomer.

The protein localises to the cytoplasm. The catalysed reaction is 7-aminomethyl-7-carbaguanosine(34) in tRNA + S-adenosyl-L-methionine = epoxyqueuosine(34) in tRNA + adenine + L-methionine + 2 H(+). It participates in tRNA modification; tRNA-queuosine biosynthesis. In terms of biological role, transfers and isomerizes the ribose moiety from AdoMet to the 7-aminomethyl group of 7-deazaguanine (preQ1-tRNA) to give epoxyqueuosine (oQ-tRNA). The protein is S-adenosylmethionine:tRNA ribosyltransferase-isomerase of Xanthomonas campestris pv. campestris (strain 8004).